Consider the following 201-residue polypeptide: ATP-dependent Clp protease proteolytic subunit (201 aa).

The Nucleophile role is filled by Ser100. The active site involves His125.

It belongs to the peptidase S14 family. In terms of assembly, component of the chloroplastic Clp protease core complex.

Its subcellular location is the plastid. The protein localises to the chloroplast stroma. The enzyme catalyses Hydrolysis of proteins to small peptides in the presence of ATP and magnesium. alpha-casein is the usual test substrate. In the absence of ATP, only oligopeptides shorter than five residues are hydrolyzed (such as succinyl-Leu-Tyr-|-NHMec, and Leu-Tyr-Leu-|-Tyr-Trp, in which cleavage of the -Tyr-|-Leu- and -Tyr-|-Trp bonds also occurs).. Its function is as follows. Cleaves peptides in various proteins in a process that requires ATP hydrolysis. Has a chymotrypsin-like activity. Plays a major role in the degradation of misfolded proteins. The sequence is that of ATP-dependent Clp protease proteolytic subunit from Ranunculus macranthus (Large buttercup).